Here is a 119-residue protein sequence, read N- to C-terminus: Protein ELF4-LIKE 2 (119 aa).

The disordered stretch occupies residues 91-119 (SVDASSEGESTGTLKSDGKANNQKRFRSG). A compositionally biased stretch (polar residues) spans 93 to 111 (DASSEGESTGTLKSDGKAN).

This sequence belongs to the EARLY FLOWERING 4 family. In terms of assembly, homodimer.

The protein resides in the nucleus. In terms of biological role, component of the central CCA1/LHY-TOC1 feedback loop in the circadian clock that promotes clock accuracy and is required for sustained rhythms in the absence of daily light/dark cycles. The chain is Protein ELF4-LIKE 2 (EFL2) from Arabidopsis thaliana (Mouse-ear cress).